Reading from the N-terminus, the 242-residue chain is Biosynthetic peptidoglycan transglycosylase (242 aa).

A helical transmembrane segment spans residues 19 to 39 (LMVVLAIFWGGGIALFSVAPV).

The protein belongs to the glycosyltransferase 51 family.

The protein resides in the cell inner membrane. It carries out the reaction [GlcNAc-(1-&gt;4)-Mur2Ac(oyl-L-Ala-gamma-D-Glu-L-Lys-D-Ala-D-Ala)](n)-di-trans,octa-cis-undecaprenyl diphosphate + beta-D-GlcNAc-(1-&gt;4)-Mur2Ac(oyl-L-Ala-gamma-D-Glu-L-Lys-D-Ala-D-Ala)-di-trans,octa-cis-undecaprenyl diphosphate = [GlcNAc-(1-&gt;4)-Mur2Ac(oyl-L-Ala-gamma-D-Glu-L-Lys-D-Ala-D-Ala)](n+1)-di-trans,octa-cis-undecaprenyl diphosphate + di-trans,octa-cis-undecaprenyl diphosphate + H(+). Its pathway is cell wall biogenesis; peptidoglycan biosynthesis. Its function is as follows. Peptidoglycan polymerase that catalyzes glycan chain elongation from lipid-linked precursors. The sequence is that of Biosynthetic peptidoglycan transglycosylase from Escherichia coli O81 (strain ED1a).